The following is a 329-amino-acid chain: GTP 3',8-cyclase (329 aa).

The region spanning 1–229 (MNPVDYLRIS…TAFVQGNGPA (229 aa)) is the Radical SAM core domain. A GTP-binding site is contributed by Arg-8. Residues Cys-15 and Cys-19 each contribute to the [4Fe-4S] cluster site. Tyr-21 provides a ligand contact to S-adenosyl-L-methionine. Cys-22 is a binding site for [4Fe-4S] cluster. Residue Arg-60 participates in GTP binding. Gly-64 contributes to the S-adenosyl-L-methionine binding site. Position 91 (Thr-91) interacts with GTP. Ser-115 contributes to the S-adenosyl-L-methionine binding site. A GTP-binding site is contributed by Lys-155. Met-189 is a binding site for S-adenosyl-L-methionine. Positions 252 and 255 each coordinate [4Fe-4S] cluster. Residue 257–259 (RMR) participates in GTP binding. [4Fe-4S] cluster is bound at residue Cys-269.

Belongs to the radical SAM superfamily. MoaA family. As to quaternary structure, monomer and homodimer. [4Fe-4S] cluster is required as a cofactor.

The catalysed reaction is GTP + AH2 + S-adenosyl-L-methionine = (8S)-3',8-cyclo-7,8-dihydroguanosine 5'-triphosphate + 5'-deoxyadenosine + L-methionine + A + H(+). It participates in cofactor biosynthesis; molybdopterin biosynthesis. In terms of biological role, catalyzes the cyclization of GTP to (8S)-3',8-cyclo-7,8-dihydroguanosine 5'-triphosphate. The chain is GTP 3',8-cyclase from Picosynechococcus sp. (strain ATCC 27264 / PCC 7002 / PR-6) (Agmenellum quadruplicatum).